The sequence spans 860 residues: Ubiquitin fusion degradation protein 3 homolog (860 aa).

6 WD repeats span residues 27–65 (AHKS…YTKT), 71–112 (PKGI…PYAI), 115–154 (EHKQ…SSSF), 163–203 (GHTL…SVFK), 204–242 (GHTD…ILRK), and 244–283 (ATQA…DGNL). The region spanning 397–497 (PIHYLEEITR…DKLSKGAASA (101 aa)) is the PFU domain. The disordered stretch occupies residues 494 to 585 (AASAQSGYED…LPQNKKKPRG (92 aa)). Positions 586–856 (PLVPVPDFYI…KNIARDIVEM (271 aa)) constitute a PUL domain.

The protein belongs to the WD repeat PLAP family. As to quaternary structure, interacts with cdc-48.1. Expressed in intestine (at protein level).

The protein resides in the cytoplasm. Its function is as follows. Plays a role in protein ubiquitination, sorting and degradation through its association with cdc-48.1 and/or cdc-48.2. This chain is Ubiquitin fusion degradation protein 3 homolog, found in Caenorhabditis elegans.